Consider the following 204-residue polypeptide: B9 domain-containing protein 1 (204 aa).

The C2 B9-type domain maps to 9–127 (FLLMVNGQVE…TIPMFVPEST (119 aa)). Residues 182–204 (GYDTGPSDTQGVLGPSPPQSFPQ) are disordered.

Belongs to the B9D family. Part of the tectonic-like complex (also named B9 complex).

It localises to the cytoplasm. The protein resides in the cytoskeleton. The protein localises to the cilium basal body. It is found in the cilium axoneme. Component of the tectonic-like complex, a complex localized at the transition zone of primary cilia and acting as a barrier that prevents diffusion of transmembrane proteins between the cilia and plasma membranes. Required for ciliogenesis and sonic hedgehog/SHH signaling. The chain is B9 domain-containing protein 1 (B9D1) from Homo sapiens (Human).